The sequence spans 126 residues: SPbeta prophage-derived uncharacterized protein YorC (126 aa).

The polypeptide is SPbeta prophage-derived uncharacterized protein YorC (yorC) (Bacillus subtilis (strain 168)).